Reading from the N-terminus, the 424-residue chain is Satellite RNA 48 kDa protein (424 aa).

Positions 51-83 are disordered; sequence PRDGGGRKRKADGSQGRPSNNPGRPSRKWTEKT.

The protein belongs to the nepovirus satellite RNA 48 kDa protein family.

The sequence is that of Satellite RNA 48 kDa protein from Tomato black ring virus (strain L) (TBRV).